A 410-amino-acid chain; its full sequence is MTISMISPSSIRLSSDKRDSSSSNLPANIEEDTQSVSSSDSGVSADSIDHHHHGHGHGHSHGGHGHSHTHNNDDSSSDCSGAGGGAHKHSHDEKYQKGRRAEKVLWAVAALSAVFIAAEFVGGFWAQSLAIMTDAGHMLSDLLSFIISIFAIRCARLPASKRLSFGYERAEVLGALTSVIILWVLTTVLVVVAIQRIVNNEHEVDADVMLITAGVGVLFNIVMGLVLHFGTGGHGHTHGGHSSHGHAHDGKNVNVRAALIHVIGDLVQSIGVLIAALIIRFTGWTLADPICTFLFSIIVLFTTVTVMRDIFFVLMEATPSHYDLSDVKKALSALEGVKGVHDLHLWSIGMDKTAFSVHLALESPNRAMENVAEARSLIRRRFGVAVATVQVEPFDEKIDSCDTCQQQETA.

2 stretches are compositionally biased toward low complexity: residues 1–13 (MTISMISPSSIRL) and 35–46 (SVSSSDSGVSAD). Residues 1-94 (MTISMISPSS…GAHKHSHDEK (94 aa)) are disordered. Residues 1–103 (MTISMISPSS…KYQKGRRAEK (103 aa)) lie on the Cytoplasmic side of the membrane. Positions 50-69 (HHHHGHGHGHSHGGHGHSHT) are enriched in basic residues. A helical membrane pass occupies residues 104–124 (VLWAVAALSAVFIAAEFVGGF). Over 125–129 (WAQSL) the chain is Extracellular. A helical membrane pass occupies residues 130–150 (AIMTDAGHMLSDLLSFIISIF). Over 151-171 (AIRCARLPASKRLSFGYERAE) the chain is Cytoplasmic. The chain crosses the membrane as a helical span at residues 172–192 (VLGALTSVIILWVLTTVLVVV). Topologically, residues 193 to 208 (AIQRIVNNEHEVDADV) are extracellular. Residues 209-229 (MLITAGVGVLFNIVMGLVLHF) traverse the membrane as a helical segment. Residues 230 to 258 (GTGGHGHTHGGHSSHGHAHDGKNVNVRAA) lie on the Cytoplasmic side of the membrane. The helical transmembrane segment at 259–279 (LIHVIGDLVQSIGVLIAALII) threads the bilayer. R280 is a topological domain (extracellular). The helical transmembrane segment at 281 to 301 (FTGWTLADPICTFLFSIIVLF) threads the bilayer. The Cytoplasmic segment spans residues 302 to 410 (TTVTVMRDIF…CDTCQQQETA (109 aa)).

It belongs to the cation diffusion facilitator (CDF) transporter (TC 2.A.4) family. SLC30A subfamily. As to expression, isoform a: Expressed in the hypodermis and the intestine. Isoform b: Expressed in the intestine, head neurons, seam cells, hypodermis, and the vulva.

The protein localises to the cytoplasmic vesicle membrane. The protein resides in the apical cell membrane. Its function is as follows. Promotes excretion of zinc from intestinal cells into the intestinal lumen in response to increased dietary zinc. Involved in cadmium resistance, possibly by promoting its transport from cells. Involved in resistance to B.thuringiensis pore-forming toxin Cry5B downstream of the sek-1 and pmk-1 MAPK kinase pathway. In Caenorhabditis elegans, this protein is Zinc transporter ttm-1.